The primary structure comprises 125 residues: NADPH-dependent 7-cyano-7-deazaguanine reductase (125 aa).

Catalysis depends on cysteine 41, which acts as the Thioimide intermediate. Aspartate 48 acts as the Proton donor in catalysis. Substrate contacts are provided by residues 63-65 and 82-83; these read IEL and HE.

It belongs to the GTP cyclohydrolase I family. QueF type 1 subfamily.

Its subcellular location is the cytoplasm. The catalysed reaction is 7-aminomethyl-7-carbaguanine + 2 NADP(+) = 7-cyano-7-deazaguanine + 2 NADPH + 3 H(+). It participates in tRNA modification; tRNA-queuosine biosynthesis. Functionally, catalyzes the NADPH-dependent reduction of 7-cyano-7-deazaguanine (preQ0) to 7-aminomethyl-7-deazaguanine (preQ1). The protein is NADPH-dependent 7-cyano-7-deazaguanine reductase of Sulfurovum sp. (strain NBC37-1).